Here is a 138-residue protein sequence, read N- to C-terminus: Large ribosomal subunit protein uL16 (138 aa).

It belongs to the universal ribosomal protein uL16 family. Part of the 50S ribosomal subunit.

Binds 23S rRNA and is also seen to make contacts with the A and possibly P site tRNAs. The polypeptide is Large ribosomal subunit protein uL16 (Gluconobacter oxydans (strain 621H) (Gluconobacter suboxydans)).